We begin with the raw amino-acid sequence, 67 residues long: MLDPSIDSLMNKLDSKYTLVTVSARRAREMQIKKDQQIEHTISHKYVGKALEEIDAGLLSFEREDSE.

The protein belongs to the RNA polymerase subunit omega family. As to quaternary structure, the RNAP catalytic core consists of 2 alpha, 1 beta, 1 beta' and 1 omega subunit. When a sigma factor is associated with the core the holoenzyme is formed, which can initiate transcription.

It carries out the reaction RNA(n) + a ribonucleoside 5'-triphosphate = RNA(n+1) + diphosphate. Its function is as follows. Promotes RNA polymerase assembly. Latches the N- and C-terminal regions of the beta' subunit thereby facilitating its interaction with the beta and alpha subunits. This chain is DNA-directed RNA polymerase subunit omega, found in Bacillus velezensis (strain DSM 23117 / BGSC 10A6 / LMG 26770 / FZB42) (Bacillus amyloliquefaciens subsp. plantarum).